The sequence spans 205 residues: Glycerol-3-phosphate acyltransferase (205 aa).

5 consecutive transmembrane segments (helical) span residues 4–24 (IAPG…AILV), 80–100 (PFWL…PVFF), 107–127 (GVAT…GVMA), 130–150 (WLLT…SALI), and 155–175 (VWWF…LILL).

Belongs to the PlsY family. Probably interacts with PlsX.

The protein localises to the cell inner membrane. The catalysed reaction is an acyl phosphate + sn-glycerol 3-phosphate = a 1-acyl-sn-glycero-3-phosphate + phosphate. The protein operates within lipid metabolism; phospholipid metabolism. In terms of biological role, catalyzes the transfer of an acyl group from acyl-phosphate (acyl-PO(4)) to glycerol-3-phosphate (G3P) to form lysophosphatidic acid (LPA). This enzyme utilizes acyl-phosphate as fatty acyl donor, but not acyl-CoA or acyl-ACP. This chain is Glycerol-3-phosphate acyltransferase, found in Klebsiella pneumoniae (strain 342).